Here is a 380-residue protein sequence, read N- to C-terminus: ATP phosphoribosyltransferase regulatory subunit (380 aa).

Belongs to the class-II aminoacyl-tRNA synthetase family. HisZ subfamily. Heteromultimer composed of HisG and HisZ subunits.

It is found in the cytoplasm. It functions in the pathway amino-acid biosynthesis; L-histidine biosynthesis; L-histidine from 5-phospho-alpha-D-ribose 1-diphosphate: step 1/9. Its function is as follows. Required for the first step of histidine biosynthesis. May allow the feedback regulation of ATP phosphoribosyltransferase activity by histidine. In Thermoanaerobacter sp. (strain X514), this protein is ATP phosphoribosyltransferase regulatory subunit.